The primary structure comprises 499 residues: Aldehyde dehydrogenase 1 (499 aa).

NAD(+)-binding positions include 164–166 (IPW), 164–167 (IPWN), 190–193 (KPAE), 223–224 (GS), 243–244 (GS), 243–248 (GSTKVG), and 266–268 (ELG). E266 (proton acceptor) is an active-site residue. Residue C300 is the Nucleophile of the active site. Residues 346 to 350 (QQYEK) and 397 to 399 (EIF) each bind NAD(+).

This sequence belongs to the aldehyde dehydrogenase family. In terms of assembly, homotetramer. In terms of tissue distribution, expressed in flowers and disk florets.

It carries out the reaction an aldehyde + NAD(+) + H2O = a carboxylate + NADH + 2 H(+). The catalysed reaction is an aldehyde + NADP(+) + H2O = a carboxylate + NADPH + 2 H(+). It catalyses the reaction octanal + NADP(+) + H2O = octanoate + NADPH + 2 H(+). The enzyme catalyses (1R,3R)-chrysanthemal + NAD(+) + H2O = (1R,3R)-chrysanthemate + NADH + 2 H(+). It carries out the reaction (1R,3R)-chrysanthemal + NADP(+) + H2O = (1R,3R)-chrysanthemate + NADPH + 2 H(+). The catalysed reaction is (E)-hept-2-enal + NADP(+) + H2O = (E)-hept-2-enoate + NADPH + 2 H(+). It catalyses the reaction dodecanal + NADP(+) + H2O = dodecanoate + NADPH + 2 H(+). The enzyme catalyses citral + NADP(+) + H2O = 3,7-dimethylocta-2,6-dienoate + NADPH + 2 H(+). It carries out the reaction perillyl aldehyde + NADP(+) + H2O = perillate + NADPH + 2 H(+). The catalysed reaction is (2E,6E)-farnesal + NADP(+) + H2O = (2E,6E)-farnesoate + NADPH + 2 H(+). It catalyses the reaction (S)-(-)-citronellal + NADP(+) + H2O = (S)-(-)-citronellate + NADPH + 2 H(+). It participates in isoprenoid biosynthesis. Component of the monoterpenoid pyrethrins biosynthesis; pyrethrins are widely used plant-derived pesticide. Mediates the conversion of trans-chrysanthemal into trans-chrysanthemic acid. Can also use octanal, hept-2-enal, dodecanal, citral, farnesal, citronellal and perillyl aldehyde as substrates. The chain is Aldehyde dehydrogenase 1 from Tanacetum cinerariifolium (Dalmatian daisy).